The sequence spans 262 residues: UPF0758 protein R01728 (262 aa).

The tract at residues 23–44 (PEKRTRNSPATAPAPATDTHYH) is disordered. A compositionally biased stretch (low complexity) spans 31-40 (PATAPAPATD). The 123-residue stretch at 140–262 (VLSSWSAVID…HVSLKGLRLF (123 aa)) folds into the MPN domain. Zn(2+) is bound by residues H211, H213, and D224. The short motif at 211-224 (HNHPSGDPTPSRAD) is the JAMM motif element.

The protein belongs to the UPF0758 family.

The chain is UPF0758 protein R01728 from Rhizobium meliloti (strain 1021) (Ensifer meliloti).